The primary structure comprises 375 residues: E3 ubiquitin-protein ligase RHF2A (375 aa).

Residues 33-74 (CSICLESFCESDPSTLTSCKHEYHLQCILEWCQRSSQCPMCW) form an RING-type; atypical zinc finger. Residues 146–159 (RARHGVRREGHRSR) show a composition bias toward basic residues. Disordered regions lie at residues 146–165 (RARHGVRREGHRSRSSSQGH), 172–262 (SSQP…SESL), and 318–375 (ERLE…SGSS). The segment covering 178–188 (SSPPPHPPMPS) has biased composition (pro residues). Polar residues-rich tracts occupy residues 211–245 (SHQSNTQPPTSSHPRQVSPSASDSNSRPLNQSSPS) and 327–336 (RPSTASVSDV). The span at 337 to 365 (SENHTPETNNEHNRAAAGDEHSVNERGVK) shows a compositional bias: basic and acidic residues.

The catalysed reaction is S-ubiquitinyl-[E2 ubiquitin-conjugating enzyme]-L-cysteine + [acceptor protein]-L-lysine = [E2 ubiquitin-conjugating enzyme]-L-cysteine + N(6)-ubiquitinyl-[acceptor protein]-L-lysine.. The protein operates within protein modification; protein ubiquitination. In terms of biological role, E3 ubiquitin-protein ligase involved in the positive regulation of the gametogenesis progression. Required for the degradation of KRP6, a cyclin-dependent kinase inhibitor which accumulates during meiosis and blocks the progression of subsequent mitoses during gametophytes development. Functions in association with RHF1A. This is E3 ubiquitin-protein ligase RHF2A from Arabidopsis thaliana (Mouse-ear cress).